Reading from the N-terminus, the 221-residue chain is Ras-related protein RABA5a (221 aa).

Position 21-28 (21-28) interacts with GTP; it reads GDSAVGKS. Residues 43 to 51 carry the Effector region motif; sequence SKSTIGVEF. Residues 69–73, 127–130, and 157–158 each bind GTP; these read DTAGQ, NKSD, and SA. 2 S-geranylgeranyl cysteine lipidation sites follow: Cys-218 and Cys-219.

Belongs to the small GTPase superfamily. Rab family.

It localises to the cell membrane. In terms of biological role, intracellular vesicle trafficking and protein transport. This Arabidopsis thaliana (Mouse-ear cress) protein is Ras-related protein RABA5a (RABA5A).